Reading from the N-terminus, the 357-residue chain is Protein RecA (357 aa).

Residue 73–80 participates in ATP binding; it reads GPESSGKT.

This sequence belongs to the RecA family.

The protein localises to the cytoplasm. In terms of biological role, can catalyze the hydrolysis of ATP in the presence of single-stranded DNA, the ATP-dependent uptake of single-stranded DNA by duplex DNA, and the ATP-dependent hybridization of homologous single-stranded DNAs. It interacts with LexA causing its activation and leading to its autocatalytic cleavage. This is Protein RecA from Methylibium petroleiphilum (strain ATCC BAA-1232 / LMG 22953 / PM1).